A 94-amino-acid chain; its full sequence is Co-chaperonin GroES (94 aa).

This sequence belongs to the GroES chaperonin family. As to quaternary structure, heptamer of 7 subunits arranged in a ring. Interacts with the chaperonin GroEL.

It localises to the cytoplasm. Its function is as follows. Together with the chaperonin GroEL, plays an essential role in assisting protein folding. The GroEL-GroES system forms a nano-cage that allows encapsulation of the non-native substrate proteins and provides a physical environment optimized to promote and accelerate protein folding. GroES binds to the apical surface of the GroEL ring, thereby capping the opening of the GroEL channel. This Lactobacillus helveticus (strain DPC 4571) protein is Co-chaperonin GroES.